A 449-amino-acid polypeptide reads, in one-letter code: Chlorobenzene dioxygenase subunit alpha (449 aa).

The 110-residue stretch at 54–163 (WLLLGHETQI…VATYKGLIFA (110 aa)) folds into the Rieske domain. [2Fe-2S] cluster-binding residues include Cys96, His98, Cys116, and His119. 3 residues coordinate Fe cation: His222, His228, and Asp376.

This sequence belongs to the bacterial ring-hydroxylating dioxygenase alpha subunit family. In terms of assembly, this dioxygenase system consists of four proteins: the two subunits of the oxygenase component (TecA1 and TecA2), a ferredoxin (TecA3) and a ferredoxin reductase (TecA4). Requires [2Fe-2S] cluster as cofactor. It depends on Fe cation as a cofactor.

It catalyses the reaction chlorobenzene + NADH + O2 + H(+) = (1R,2R)-3-chlorocyclohexa-3,5-diene-1,2-diol + NAD(+). It participates in aromatic compound metabolism. Part of the oxygenase component of the chlorobenzene dioxygenase system that catalyzes the dihydroxylation of a range of aromatic compounds, including chlorinated benzenes and toluenes, and dinuclear aromatics such as biphenyl and dibenzo-p-dioxin. The alpha subunit is responsible for substrate specificity. The sequence is that of Chlorobenzene dioxygenase subunit alpha from Cupriavidus sp. (strain PS12).